A 218-amino-acid polypeptide reads, in one-letter code: ER lumen protein-retaining receptor (218 aa).

Residues 1–2 (MN) lie on the Lumenal side of the membrane. A helical membrane pass occupies residues 3-23 (LFSFLGDMLHLGSMLILLFKI). Residues 24–57 (KNDKSCAGVSLKSQILFTIVFTARYLDLFTNYVS) are Cytoplasmic-facing. The chain crosses the membrane as a helical span at residues 58–78 (LYITFMKITYIAVSYYTLHLI). Residues 79–94 (ARKYKFTYDKDHDTFK) are Lumenal-facing. The helical transmembrane segment at 95-115 (IVYLIASCAILSLITYDKTTI) threads the bilayer. Topologically, residues 116–123 (GIYSTFLE) are cytoplasmic. The chain crosses the membrane as a helical span at residues 124–144 (ILWTFSIYLESIAILPQLILL). Topologically, residues 145 to 152 (QRTGEVEA) are lumenal. Residues 153 to 173 (LTSNYIVLLGGYRAFYLFNWI) form a helical membrane-spanning segment. The Cytoplasmic segment spans residues 174 to 184 (YRITFYNWSGK). Residues 185–205 (IEMLSGLLQTILYADFFYYYA) traverse the membrane as a helical segment. Topologically, residues 206-218 (KSRMYGKKLVLPQ) are lumenal.

Belongs to the ERD2 family.

The protein resides in the endoplasmic reticulum membrane. In terms of biological role, required for the retention of luminal endoplasmic reticulum proteins. Determines the specificity of the luminal ER protein retention system. Also required for normal vesicular traffic through the Golgi. This chain is ER lumen protein-retaining receptor (kdelr), found in Dictyostelium discoideum (Social amoeba).